The primary structure comprises 558 residues: Putative cation/proton antiporter YbaL (558 aa).

The Periplasmic segment spans residues 1-3 (MHH). A helical transmembrane segment spans residues 4-24 (ATPLITTIVGGLVLAFILGML). The Cytoplasmic portion of the chain corresponds to 25 to 31 (ANKLRIS). The chain crosses the membrane as a helical span at residues 32–52 (PLVGYLLAGVLAGPFTPGFVA). Residues 53–55 (DTK) lie on the Periplasmic side of the membrane. Residues 56-76 (LAPELAELGVILLMFGVGLHF) form a helical membrane-spanning segment. Residues 77 to 85 (SLKDLMAVK) are Cytoplasmic-facing. The helical transmembrane segment at 86 to 106 (AIAIPGAIAQIAVATLLGMAL) threads the bilayer. Residues 107–112 (SAVLGW) lie on the Periplasmic side of the membrane. The helical transmembrane segment at 113–133 (SLMTGIVFGLCLSTASTVVLL) threads the bilayer. Over 134–148 (RALEERQLIDSQRGQ) the chain is Cytoplasmic. Residues 149-169 (IAIGWLIVEDLVMVLTLVLLP) form a helical membrane-spanning segment. Residues 170–185 (AVAGMMEQGDVGFATL) lie on the Periplasmic side of the membrane. The chain crosses the membrane as a helical span at residues 186-206 (AVDMGITIGKVIAFIAIMMLV). The Cytoplasmic segment spans residues 207 to 225 (GRRLVPWIMARSAATGSRE). Residues 226-246 (LFTLSVLALALGVAFGAVELF) traverse the membrane as a helical segment. Position 247 (D247) is a topological domain, periplasmic. The helical transmembrane segment at 248–268 (VSFALGAFFAGMVLNESELSH) threads the bilayer. Over 269-279 (RAAHDTLPLRD) the chain is Cytoplasmic. Residues 280 to 300 (AFAVLFFVSVGMLFDPLILIQ) traverse the membrane as a helical segment. Residues 301-303 (QPL) are Periplasmic-facing. Residues 304–324 (AVLATLAIILFGKSLAAFFLV) traverse the membrane as a helical segment. Residues 325-336 (RLFGHSQRTALT) are Cytoplasmic-facing. Residues 337–357 (IAASLAQIGEFAFILAGLGMA) traverse the membrane as a helical segment. Residues 358 to 367 (LNLLPQAGQN) are Periplasmic-facing. The helical transmembrane segment at 368–388 (LVLAGAILSIMLNPVLFALLE) threads the bilayer. The Cytoplasmic portion of the chain corresponds to 389-558 (KYLAKTETLE…TPPAGEVVTG (170 aa)). One can recognise an RCK N-terminal domain in the interval 417–534 (CNHALLVGYG…TERGANQVVM (118 aa)). AMP is bound by residues 427–428 (RV), 447–448 (ET), 467–468 (NA), E494, and R514.

Belongs to the monovalent cation:proton antiporter 2 (CPA2) transporter (TC 2.A.37) family.

The protein resides in the cell inner membrane. This Escherichia coli (strain K12) protein is Putative cation/proton antiporter YbaL (ybaL).